The sequence spans 158 residues: ABA-responsive protein ABR18 (158 aa).

This sequence belongs to the BetVI family.

The polypeptide is ABA-responsive protein ABR18 (Pisum sativum (Garden pea)).